The primary structure comprises 270 residues: 4-hydroxy-tetrahydrodipicolinate reductase (270 aa).

NAD(+) contacts are provided by residues 9–14 (GAGGRM) and glutamate 35. Arginine 36 contributes to the NADP(+) binding site. NAD(+)-binding positions include 99-101 (GTT) and 123-126 (ASNF). Residue histidine 156 is the Proton donor/acceptor of the active site. Histidine 157 provides a ligand contact to (S)-2,3,4,5-tetrahydrodipicolinate. Lysine 160 functions as the Proton donor in the catalytic mechanism. Position 166–167 (166–167 (GT)) interacts with (S)-2,3,4,5-tetrahydrodipicolinate.

It belongs to the DapB family.

It localises to the cytoplasm. It carries out the reaction (S)-2,3,4,5-tetrahydrodipicolinate + NAD(+) + H2O = (2S,4S)-4-hydroxy-2,3,4,5-tetrahydrodipicolinate + NADH + H(+). It catalyses the reaction (S)-2,3,4,5-tetrahydrodipicolinate + NADP(+) + H2O = (2S,4S)-4-hydroxy-2,3,4,5-tetrahydrodipicolinate + NADPH + H(+). It participates in amino-acid biosynthesis; L-lysine biosynthesis via DAP pathway; (S)-tetrahydrodipicolinate from L-aspartate: step 4/4. Functionally, catalyzes the conversion of 4-hydroxy-tetrahydrodipicolinate (HTPA) to tetrahydrodipicolinate. The chain is 4-hydroxy-tetrahydrodipicolinate reductase from Haemophilus influenzae (strain PittGG).